A 673-amino-acid polypeptide reads, in one-letter code: DNA ligase (673 aa).

Residues 33-37, 82-83, and Glu-114 contribute to the NAD(+) site; these read DAEYD and SL. Lys-116 functions as the N6-AMP-lysine intermediate in the catalytic mechanism. Residues Arg-137, Glu-174, Lys-291, and Lys-315 each contribute to the NAD(+) site. 4 residues coordinate Zn(2+): Cys-409, Cys-412, Cys-427, and Cys-433. The region spanning 592 to 673 is the BRCT domain; sequence AQEQPLAGLV…LINLLEQHNG (82 aa).

This sequence belongs to the NAD-dependent DNA ligase family. LigA subfamily. Mg(2+) is required as a cofactor. Mn(2+) serves as cofactor.

The catalysed reaction is NAD(+) + (deoxyribonucleotide)n-3'-hydroxyl + 5'-phospho-(deoxyribonucleotide)m = (deoxyribonucleotide)n+m + AMP + beta-nicotinamide D-nucleotide.. In terms of biological role, DNA ligase that catalyzes the formation of phosphodiester linkages between 5'-phosphoryl and 3'-hydroxyl groups in double-stranded DNA using NAD as a coenzyme and as the energy source for the reaction. It is essential for DNA replication and repair of damaged DNA. This chain is DNA ligase, found in Pseudoalteromonas translucida (strain TAC 125).